The chain runs to 621 residues: Chaperone protein HscA homolog (621 aa).

This sequence belongs to the heat shock protein 70 family.

Functionally, chaperone involved in the maturation of iron-sulfur cluster-containing proteins. Has a low intrinsic ATPase activity which is markedly stimulated by HscB. This Polynucleobacter necessarius subsp. necessarius (strain STIR1) protein is Chaperone protein HscA homolog.